Here is a 28-residue protein sequence, read N- to C-terminus: Potassium channel toxin alpha-KTx 9.10 (28 aa).

Disulfide bonds link cysteine 3–cysteine 19, cysteine 6–cysteine 24, and cysteine 10–cysteine 26.

This sequence belongs to the short scorpion toxin superfamily. Potassium channel inhibitor family. Alpha-KTx 09 subfamily. As to expression, expressed by the venom gland.

It is found in the secreted. Blocks Shaker potassium channels. The sequence is that of Potassium channel toxin alpha-KTx 9.10 from Mesobuthus eupeus (Lesser Asian scorpion).